A 444-amino-acid chain; its full sequence is Exodeoxyribonuclease 7 large subunit (444 aa).

This sequence belongs to the XseA family. In terms of assembly, heterooligomer composed of large and small subunits.

Its subcellular location is the cytoplasm. It catalyses the reaction Exonucleolytic cleavage in either 5'- to 3'- or 3'- to 5'-direction to yield nucleoside 5'-phosphates.. Its function is as follows. Bidirectionally degrades single-stranded DNA into large acid-insoluble oligonucleotides, which are then degraded further into small acid-soluble oligonucleotides. This chain is Exodeoxyribonuclease 7 large subunit, found in Rickettsia akari (strain Hartford).